We begin with the raw amino-acid sequence, 265 residues long: Type III pantothenate kinase (265 aa).

6–13 (DVGNTNIV) contacts ATP. Substrate contacts are provided by residues Y100 and 107–110 (GADR). Catalysis depends on D109, which acts as the Proton acceptor. D129 serves as a coordination point for K(+). Residue T132 participates in ATP binding. Residue T184 coordinates substrate.

The protein belongs to the type III pantothenate kinase family. As to quaternary structure, homodimer. NH4(+) is required as a cofactor. It depends on K(+) as a cofactor.

It localises to the cytoplasm. The catalysed reaction is (R)-pantothenate + ATP = (R)-4'-phosphopantothenate + ADP + H(+). The protein operates within cofactor biosynthesis; coenzyme A biosynthesis; CoA from (R)-pantothenate: step 1/5. Functionally, catalyzes the phosphorylation of pantothenate (Pan), the first step in CoA biosynthesis. This Alkaliphilus oremlandii (strain OhILAs) (Clostridium oremlandii (strain OhILAs)) protein is Type III pantothenate kinase.